Reading from the N-terminus, the 209-residue chain is Uracil phosphoribosyltransferase (209 aa).

5-phospho-alpha-D-ribose 1-diphosphate is bound by residues R79, R104, and 131 to 139 (DPMLATGVS). Uracil-binding positions include I194 and 199–201 (GDA). D200 lines the 5-phospho-alpha-D-ribose 1-diphosphate pocket.

This sequence belongs to the UPRTase family. Requires Mg(2+) as cofactor.

It catalyses the reaction UMP + diphosphate = 5-phospho-alpha-D-ribose 1-diphosphate + uracil. Its pathway is pyrimidine metabolism; UMP biosynthesis via salvage pathway; UMP from uracil: step 1/1. Its activity is regulated as follows. Allosterically activated by GTP. In terms of biological role, catalyzes the conversion of uracil and 5-phospho-alpha-D-ribose 1-diphosphate (PRPP) to UMP and diphosphate. The chain is Uracil phosphoribosyltransferase from Thermotoga neapolitana (strain ATCC 49049 / DSM 4359 / NBRC 107923 / NS-E).